The sequence spans 398 residues: Elongation factor Tu (398 aa).

Residues 10–208 (KPHVNVGTIG…ALDSHIPEPT (199 aa)) enclose the tr-type G domain. Positions 19 to 26 (GHIDHGKT) are G1. Position 19–26 (19–26 (GHIDHGKT)) interacts with GTP. T26 is a binding site for Mg(2+). Positions 60–64 (TKTVT) are G2. Residues 83–86 (DCPG) form a G3 region. GTP contacts are provided by residues 83–87 (DCPGH) and 138–141 (NKCD). The interval 138 to 141 (NKCD) is G4. Positions 176-178 (SSL) are G5.

This sequence belongs to the TRAFAC class translation factor GTPase superfamily. Classic translation factor GTPase family. EF-Tu/EF-1A subfamily. Monomer.

It is found in the cytoplasm. The enzyme catalyses GTP + H2O = GDP + phosphate + H(+). GTP hydrolase that promotes the GTP-dependent binding of aminoacyl-tRNA to the A-site of ribosomes during protein biosynthesis. The chain is Elongation factor Tu from Rhodopirellula baltica (strain DSM 10527 / NCIMB 13988 / SH1).